The chain runs to 573 residues: Sulfite reductase [NADPH] hemoprotein beta-component (573 aa).

Residues cysteine 438, cysteine 444, cysteine 483, and cysteine 487 each contribute to the [4Fe-4S] cluster site. Residue cysteine 487 coordinates siroheme.

The protein belongs to the nitrite and sulfite reductase 4Fe-4S domain family. As to quaternary structure, alpha(8)-beta(8). The alpha component is a flavoprotein, the beta component is a hemoprotein. The cofactor is siroheme. Requires [4Fe-4S] cluster as cofactor.

It catalyses the reaction hydrogen sulfide + 3 NADP(+) + 3 H2O = sulfite + 3 NADPH + 4 H(+). It participates in sulfur metabolism; hydrogen sulfide biosynthesis; hydrogen sulfide from sulfite (NADPH route): step 1/1. Functionally, component of the sulfite reductase complex that catalyzes the 6-electron reduction of sulfite to sulfide. This is one of several activities required for the biosynthesis of L-cysteine from sulfate. The chain is Sulfite reductase [NADPH] hemoprotein beta-component from Nitrosomonas europaea (strain ATCC 19718 / CIP 103999 / KCTC 2705 / NBRC 14298).